A 574-amino-acid polypeptide reads, in one-letter code: uncharacterized protein (574 aa).

Helical transmembrane passes span 14 to 34, 54 to 74, 124 to 144, 205 to 225, 253 to 273, 323 to 343, 350 to 370, 403 to 423, 441 to 461, 485 to 505, and 520 to 540; these read FFPTLWLILAPLILSPLLFFG, VVPLAVTSFIPMIALPFLGIV, WLMAGFMIITSFISLWISDTA, ICKCMMLLVAHASLIGGTGTI, SWMAFAIPPMIFYMFSSWFIV, LVIFVLAVLSWVSSDPKVIPG, KGYVTDSCSGLVAVFLLFIWP, FPWSIILLLGAGFAISDAVRV, MPFFVMQIILSIVVVVMTEFS, PLYFSIPTAIGPSFSFMLPMA, and MIDMVSCGVFLNIFCIAITAI. Residues Asn-565 and Asn-569 are each glycosylated (N-linked (GlcNAc...) asparagine).

It belongs to the SLC13A/DASS transporter (TC 2.A.47) family. NADC subfamily.

Its subcellular location is the membrane. This is an uncharacterized protein from Caenorhabditis elegans.